The following is an 889-amino-acid chain: DNA mismatch repair protein MutS (889 aa).

641–648 (GPNMAGKS) contributes to the ATP binding site.

Belongs to the DNA mismatch repair MutS family.

In terms of biological role, this protein is involved in the repair of mismatches in DNA. It is possible that it carries out the mismatch recognition step. This protein has a weak ATPase activity. The protein is DNA mismatch repair protein MutS of Orientia tsutsugamushi (strain Ikeda) (Rickettsia tsutsugamushi).